Reading from the N-terminus, the 229-residue chain is 5'-methylthioadenosine/S-adenosylhomocysteine nucleosidase (229 aa).

Glu-12 functions as the Proton acceptor in the catalytic mechanism. Residues Gly-78, Ile-152, and 173 to 174 each bind substrate; that span reads ME. Asp-197 functions as the Proton donor in the catalytic mechanism.

The protein belongs to the PNP/UDP phosphorylase family. MtnN subfamily.

The enzyme catalyses S-adenosyl-L-homocysteine + H2O = S-(5-deoxy-D-ribos-5-yl)-L-homocysteine + adenine. The catalysed reaction is S-methyl-5'-thioadenosine + H2O = 5-(methylsulfanyl)-D-ribose + adenine. It catalyses the reaction 5'-deoxyadenosine + H2O = 5-deoxy-D-ribose + adenine. Its pathway is amino-acid biosynthesis; L-methionine biosynthesis via salvage pathway; S-methyl-5-thio-alpha-D-ribose 1-phosphate from S-methyl-5'-thioadenosine (hydrolase route): step 1/2. Its function is as follows. Catalyzes the irreversible cleavage of the glycosidic bond in both 5'-methylthioadenosine (MTA) and S-adenosylhomocysteine (SAH/AdoHcy) to adenine and the corresponding thioribose, 5'-methylthioribose and S-ribosylhomocysteine, respectively. Also cleaves 5'-deoxyadenosine, a toxic by-product of radical S-adenosylmethionine (SAM) enzymes, into 5-deoxyribose and adenine. The protein is 5'-methylthioadenosine/S-adenosylhomocysteine nucleosidase of Mannheimia succiniciproducens (strain KCTC 0769BP / MBEL55E).